The sequence spans 105 residues: UPF0235 protein Mchl_2407 (105 aa).

This sequence belongs to the UPF0235 family.

The chain is UPF0235 protein Mchl_2407 from Methylorubrum extorquens (strain CM4 / NCIMB 13688) (Methylobacterium extorquens).